We begin with the raw amino-acid sequence, 57 residues long: UPF0509 protein YciZ (57 aa).

The protein belongs to the UPF0509 family.

In Escherichia coli O127:H6 (strain E2348/69 / EPEC), this protein is UPF0509 protein YciZ.